The primary structure comprises 441 residues: Ribulose bisphosphate carboxylase large chain (441 aa).

Lys-4 carries the N6,N6,N6-trimethyllysine modification. 2 residues coordinate substrate: Asn-113 and Thr-163. The Proton acceptor role is filled by Lys-165. Position 167 (Lys-167) interacts with substrate. Mg(2+) is bound by residues Lys-191, Asp-193, and Glu-194. Lys-191 bears the N6-carboxylysine mark. His-284 functions as the Proton acceptor in the catalytic mechanism. Positions 285, 317, and 369 each coordinate substrate.

Belongs to the RuBisCO large chain family. Type I subfamily. As to quaternary structure, heterohexadecamer of 8 large chains and 8 small chains; disulfide-linked. The disulfide link is formed within the large subunit homodimers. Mg(2+) serves as cofactor. The disulfide bond which can form in the large chain dimeric partners within the hexadecamer appears to be associated with oxidative stress and protein turnover.

The protein localises to the plastid. The protein resides in the chloroplast. It carries out the reaction 2 (2R)-3-phosphoglycerate + 2 H(+) = D-ribulose 1,5-bisphosphate + CO2 + H2O. The enzyme catalyses D-ribulose 1,5-bisphosphate + O2 = 2-phosphoglycolate + (2R)-3-phosphoglycerate + 2 H(+). Its function is as follows. RuBisCO catalyzes two reactions: the carboxylation of D-ribulose 1,5-bisphosphate, the primary event in carbon dioxide fixation, as well as the oxidative fragmentation of the pentose substrate in the photorespiration process. Both reactions occur simultaneously and in competition at the same active site. The polypeptide is Ribulose bisphosphate carboxylase large chain (Heliamphora nutans (Venezuelan marsh pitcher plant)).